Consider the following 247-residue polypeptide: 14-3-3 protein gamma-B (247 aa).

It belongs to the 14-3-3 family. As to quaternary structure, homodimer, and heterodimer with other family members.

It is found in the cytoplasm. Functionally, adapter protein implicated in the regulation of a large spectrum of both general and specialized signaling pathways. Binds to a large number of partners, usually by recognition of a phosphoserine or phosphothreonine motif. Binding generally results in the modulation of the activity of the binding partner. The sequence is that of 14-3-3 protein gamma-B (ywhag-b) from Xenopus laevis (African clawed frog).